A 595-amino-acid polypeptide reads, in one-letter code: uncharacterized protein (595 aa).

9 helical membrane passes run 64 to 84, 86 to 106, 239 to 259, 281 to 301, 334 to 354, 368 to 388, 504 to 524, 547 to 567, and 571 to 591; these read VVFL…LIVF, IFYA…IGVL, FYVI…PVAS, FYLW…GILP, VHFI…LFFI, MFGI…HFII, FIYV…SYIM, YLFQ…GILT, and IIAG…LFKF.

This sequence to M.jannaschii FlaJ.

The protein resides in the cell membrane. This is an uncharacterized protein from Methanocaldococcus jannaschii (strain ATCC 43067 / DSM 2661 / JAL-1 / JCM 10045 / NBRC 100440) (Methanococcus jannaschii).